The following is a 47-amino-acid chain: Large ribosomal subunit protein bL34 (47 aa).

This sequence belongs to the bacterial ribosomal protein bL34 family.

This Mycolicibacterium vanbaalenii (strain DSM 7251 / JCM 13017 / BCRC 16820 / KCTC 9966 / NRRL B-24157 / PYR-1) (Mycobacterium vanbaalenii) protein is Large ribosomal subunit protein bL34.